We begin with the raw amino-acid sequence, 438 residues long: Trigger factor (438 aa).

In terms of domain architecture, PPIase FKBP-type spans 160-245 (DDKVTIDFVG…VKKIQQAELP (86 aa)).

Belongs to the FKBP-type PPIase family. Tig subfamily.

It is found in the cytoplasm. The enzyme catalyses [protein]-peptidylproline (omega=180) = [protein]-peptidylproline (omega=0). Involved in protein export. Acts as a chaperone by maintaining the newly synthesized protein in an open conformation. Functions as a peptidyl-prolyl cis-trans isomerase. In Francisella tularensis subsp. mediasiatica (strain FSC147), this protein is Trigger factor.